A 236-amino-acid polypeptide reads, in one-letter code: CD81 protein (236 aa).

Topologically, residues 1–12 (MGVEGCTKCIKY) are cytoplasmic. A helical transmembrane segment spans residues 13–33 (LLFVFNFVFWLAGGVILGVAL). Over 34-63 (WLRHDPQTTNLLYLELGDKPAPNTFYVGIY) the chain is Extracellular. Residues 64–84 (ILIAVGAVMMFVGFLGCYGAI) traverse the membrane as a helical segment. Residues 85–89 (QESQC) lie on the Cytoplasmic side of the membrane. A helical transmembrane segment spans residues 90–112 (LLGTFFTCLVILFACEVAAGIWG). At 113–201 (FVNKDQIAKD…QKIDELFSGK (89 aa)) the chain is on the extracellular side. 2 cysteine pairs are disulfide-bonded: Cys156-Cys190 and Cys157-Cys175. Residues 202–224 (LYLIGIAAIVVAVIMIFEMILSM) traverse the membrane as a helical segment. A cholesterol-binding site is contributed by Glu219. The Cytoplasmic segment spans residues 225 to 236 (VLCCGIRNSSVY).

The protein belongs to the tetraspanin (TM4SF) family. Homodimer. Part of a complex composed of CD19, CR2/CD21, CD81 and IFITM1/CD225 in the membrane of mature B cells. Interacts (via the second extracellular domain) with CD19; this interaction is initiated early during biosynthesis in the ER and enables trafficking of only properly folded CD19. Part of a complex that includes MHC class II/HLA-DR molecules and IFITM1. Interacts with IFITM1. Interacts with IFITM2 and IFITM3. Part of integrin-tetraspanin complex composed of CD9, CD81, beta-1 and beta-2 integrins in the membrane of monocyte/macrophages. Interacts (via the second extracellular domain) with integrin ITGAV:ITGB3. Interacts with CD247/CD3 zeta, ICAM1 and CD9 at the immune synapse on T cell membrane. Part of a GPCR-tetraspanin complex consisting at least of ADGRG1, CD81, possibly CD9, and GNA11 in which CD81 enhances the association of ADGRG1 with GNA11. Part of a complex composed of CD9, CD81, PTGFRN and IGSF8. Interacts directly with IGSF8. Interacts with CD53 and SCIMP. Interacts with SAMHD1 (via its C-terminus). Interacts with glypican GPC3 and with the transcriptional repressor HHEX; binding to GPC3 decreases the availability of free CD81 for binding to HHEX, resulting in nuclear translocation of HHEX and transcriptional repression. Interacts with CLDN1. Interacts with CLDN6 and CLDN9. In terms of processing, not glycosylated. Post-translationally, likely constitutively palmitoylated at low levels. Protein palmitoylation is up-regulated upon coligation of BCR and CD9-C2R-CD81 complexes in lipid rafts.

It is found in the cell membrane. The protein localises to the basolateral cell membrane. In terms of biological role, structural component of specialized membrane microdomains known as tetraspanin-enriched microdomains (TERMs), which act as platforms for receptor clustering and signaling. Essential for trafficking and compartmentalization of CD19 receptor on the surface of activated B cells. Upon initial encounter with microbial pathogens, enables the assembly of CD19-CR2/CD21 and B cell receptor (BCR) complexes at signaling TERMs, lowering the threshold dose of antigen required to trigger B cell clonal expansion and antibody production. In T cells, facilitates the localization of CD247/CD3 zeta at antigen-induced synapses with B cells, providing for costimulation and polarization toward T helper type 2 phenotype. Present in MHC class II compartments, may also play a role in antigen presentation. Can act both as positive and negative regulator of homotypic or heterotypic cell-cell fusion processes. Positively regulates sperm-egg fusion and may be involved in acrosome reaction. In myoblasts, associates with CD9 and PTGFRN and inhibits myotube fusion during muscle regeneration. In macrophages, associates with CD9 and beta-1 and beta-2 integrins, and prevents macrophage fusion into multinucleated giant cells specialized in ingesting complement-opsonized large particles. Also prevents the fusion of mononuclear cell progenitors into osteoclasts in charge of bone resorption. May regulate the compartmentalization of enzymatic activities. In T cells, defines the subcellular localization of dNTPase SAMHD1 and permits its degradation by the proteasome, thereby controlling intracellular dNTP levels. Also involved in cell adhesion and motility. Positively regulates integrin-mediated adhesion of macrophages, particularly relevant for the inflammatory response in the lung. This chain is CD81 protein (CD81), found in Saguinus oedipus (Cotton-top tamarin).